The chain runs to 205 residues: Small ribosomal subunit protein uS4 (205 aa).

The disordered stretch occupies residues 19–45; the sequence is IWGRPKSPVNRREYGPGQHGQRRKGKL. An S4 RNA-binding domain is found at 94–157; it reads SRLDAVVYRA…KQLAIVLEAV (64 aa).

Belongs to the universal ribosomal protein uS4 family. In terms of assembly, part of the 30S ribosomal subunit. Contacts protein S5. The interaction surface between S4 and S5 is involved in control of translational fidelity.

One of the primary rRNA binding proteins, it binds directly to 16S rRNA where it nucleates assembly of the body of the 30S subunit. In terms of biological role, with S5 and S12 plays an important role in translational accuracy. The polypeptide is Small ribosomal subunit protein uS4 (Brucella suis biovar 1 (strain 1330)).